An 81-amino-acid chain; its full sequence is Putative defensin-like protein 52 (81 aa).

An N-terminal signal peptide occupies residues 1–20 (MTFFLVIILAISSSNYNVLA). 2 disulfide bridges follow: Cys-31-Cys-55 and Cys-41-Cys-64.

Belongs to the DEFL family.

The protein localises to the secreted. The sequence is that of Putative defensin-like protein 52 from Arabidopsis thaliana (Mouse-ear cress).